An 897-amino-acid polypeptide reads, in one-letter code: Serine/threonine-protein kinase ATG1 (897 aa).

The region spanning 24–325 (YTAEKEIGKG…FEEFFANKVV (302 aa)) is the Protein kinase domain. ATP is bound by residues 30 to 38 (IGKGSFATV) and Lys54. Residue Ser34 is modified to Phosphoserine. Thr129 is subject to Phosphothreonine. Catalysis depends on Asp172, which acts as the Proton acceptor. A Phosphothreonine; by autocatalysis modification is found at Thr226. Ser304, Ser365, and Ser390 each carry phosphoserine. The short motif at 429–432 (YVVV) is the LIR element. The tract at residues 490–509 (LLRATSSSSGGSDGSRRPSL) is disordered. Phosphoserine; by PKA is present on residues Ser508 and Ser515. Phosphoserine is present on residues Ser533, Ser551, and Ser552. A Phosphothreonine modification is found at Thr590. Ser621, Ser635, Ser638, Ser647, Ser677, Ser680, Ser683, Ser769, and Ser783 each carry phosphoserine. A required for Cvt trafficking region spans residues 880-886 (DSIANRL).

The protein belongs to the protein kinase superfamily. Ser/Thr protein kinase family. APG1/unc-51/ULK1 subfamily. In terms of assembly, homodimer. Dimerization requires the presence of ATG13. Forms a ternary complex with ATG13 and ATG17. Also interacts with ATG11. Post-translationally, autophosphorylated at Thr-226 and Ser-390. The phosphorylation state may play a role in the induction of protein degradation upon starvation. Phosphorylation at Thr-226 within the activation loop is required for protein kinase activity whereas phosphorylation at Ser-34 leads to inhibition of kinase activity. Phosphorylation of Ser-508 and Ser-515 by PKA is required to induce autophagy but not for kinase activity.

It localises to the cytoplasm. The protein resides in the preautophagosomal structure membrane. It catalyses the reaction L-seryl-[protein] + ATP = O-phospho-L-seryl-[protein] + ADP + H(+). The catalysed reaction is L-threonyl-[protein] + ATP = O-phospho-L-threonyl-[protein] + ADP + H(+). With respect to regulation, activated by hypophosphorylated form of ATG13 (present in nitrogen starvation conditions). Also activated by autophopsphorylation of Thr-226 and inhibited by phosphorylation of Ser-34. In terms of biological role, serine/threonine protein kinase involved in the cytoplasm to vacuole transport (Cvt) and found to be essential in autophagy, where it is required for the formation of autophagosomes. Involved in the clearance of protein aggregates which cannot be efficiently cleared by the proteasome. Required for selective autophagic degradation of the nucleus (nucleophagy) as well as for mitophagy which contributes to regulate mitochondrial quantity and quality by eliminating the mitochondria to a basal level to fulfill cellular energy requirements and preventing excess ROS production. Also involved in endoplasmic reticulum-specific autophagic process, in selective removal of ER-associated degradation (ERAD) substrates. Plays a key role in ATG9 and ATG23 cycling through the pre-autophagosomal structure and is necessary to promote ATG18 binding to ATG9 through phosphorylation of ATG9. Catalyzes phosphorylation of ATG4, decreasing the interaction between ATG4 and ATG8 and impairing deconjugation of PE-conjugated forms of ATG8. Finally, ATG1 is also required for the maintenance of cell viability under starvation and for glycogen storage during stationary phase. Plays a role in genome stability through suppression of abnormal mitosis under starvation, and in regulation of filamentous growth. The protein is Serine/threonine-protein kinase ATG1 of Saccharomyces cerevisiae (strain YJM789) (Baker's yeast).